Here is a 95-residue protein sequence, read N- to C-terminus: Acylphosphatase (95 aa).

Positions 8–95 constitute an Acylphosphatase-like domain; sequence RVSARITGRV…DAFEGFRVRR (88 aa). Residues Arg-23 and Asn-41 contribute to the active site.

This sequence belongs to the acylphosphatase family.

The catalysed reaction is an acyl phosphate + H2O = a carboxylate + phosphate + H(+). The protein is Acylphosphatase (acyP) of Salinibacter ruber (strain DSM 13855 / M31).